Here is a 1445-residue protein sequence, read N- to C-terminus: CD109 antigen (1445 aa).

The first 21 residues, 1-21 (MQGPPLLTAAHLLCVCTAALA), serve as a signal peptide directing secretion. N-linked (GlcNAc...) asparagine glycosylation is found at Asn68, Asn118, Asn247, Asn279, Asn365, Asn419, Asn513, and Asn645. Positions 593–702 (DKSVNLMNAS…TWIWLDTNMG (110 aa)) are bait region (approximate). The segment at residues 921–924 (CGEQ) is a cross-link (isoglutamyl cysteine thioester (Cys-Gln)). Asn1086 and Asn1355 each carry an N-linked (GlcNAc...) asparagine glycan. Ala1420 carries the GPI-anchor amidated alanine lipid modification. A propeptide spans 1421–1445 (SGSHHHSSVIFIFCFKLLYFMELWL) (removed in mature form).

This sequence belongs to the protease inhibitor I39 (alpha-2-macroglobulin) family. Heterodimer; disulfide-linked. Interacts with TGFB1 and TGFBR1. Forms a heteromeric complex with TGFBR1, TGFBR2 and TGFBR3 in a ligand-independent manner. N-glycosylated. Post-translationally, 2 forms of 150 (p150) and 120 kDa (p120) exist due to proteolytic degradation from a 180 kDa form. As to expression, widely expressed with high level in uterus, aorta, heart, lung, trachea, placenta and in fetal heart, kidney, liver, spleen and lung. Expressed by CD34(+) acute myeloid leukemia cell lines, T-cell lines, activated T-lymphoblasts, endothelial cells and activated platelets. Isoform 4 is expressed in placenta. Isoform 1 is expressed in keratinocytes and placenta.

Its subcellular location is the cell membrane. In terms of biological role, modulates negatively TGFB1 signaling in keratinocytes. The protein is CD109 antigen (CD109) of Homo sapiens (Human).